Here is a 106-residue protein sequence, read N- to C-terminus: Testis-specific basic protein Y 2 (106 aa).

It belongs to the VCX/VCY family. In terms of assembly, interacts with MAP1S. Interacts with UBE3A (via HECT domain). Expressed exclusively in testis. Expressed in ejaculated spermatozoa of germ cell. Expressed in the nuclei of spermatogonia, spermatocytes, and round spermatids, except elongated spermatids (at protein level).

The protein is Testis-specific basic protein Y 2 (BPY2) of Homo sapiens (Human).